An 846-amino-acid chain; its full sequence is uncharacterized protein (846 aa).

6 WD repeats span residues 88–129 (TKHI…LLYD), 132–172 (EHSR…STIT), 175–215 (GNSE…LPFL), 219–258 (AHNG…KKSL), 262–309 (NNVS…IPYR), and 313–348 (CHDS…NAFN). The interval 541–560 (PREASTPSESSNSSIESEDN) is disordered. The segment covering 544-555 (ASTPSESSNSSI) has biased composition (low complexity). The stretch at 624–663 (FHRSSVTSASIKSREAVLSAGNSSRRASIFLDQLSLHGDT) is one WD 7 repeat.

This is an uncharacterized protein from Schizosaccharomyces pombe (strain 972 / ATCC 24843) (Fission yeast).